We begin with the raw amino-acid sequence, 328 residues long: Malate dehydrogenase (328 aa).

NAD(+) is bound at residue 11 to 17; the sequence is GAAGQIG. Positions 92 and 98 each coordinate substrate. NAD(+) is bound by residues N105, Q112, and 129–131; that span reads VGN. Positions 131 and 162 each coordinate substrate. The active-site Proton acceptor is H187.

Belongs to the LDH/MDH superfamily. MDH type 2 family.

The catalysed reaction is (S)-malate + NAD(+) = oxaloacetate + NADH + H(+). Catalyzes the reversible oxidation of malate to oxaloacetate. This Coxiella burnetii (strain CbuK_Q154) (Coxiella burnetii (strain Q154)) protein is Malate dehydrogenase.